Reading from the N-terminus, the 241-residue chain is Phosphoribosylaminoimidazole-succinocarboxamide synthase (241 aa).

This sequence belongs to the SAICAR synthetase family.

It carries out the reaction 5-amino-1-(5-phospho-D-ribosyl)imidazole-4-carboxylate + L-aspartate + ATP = (2S)-2-[5-amino-1-(5-phospho-beta-D-ribosyl)imidazole-4-carboxamido]succinate + ADP + phosphate + 2 H(+). It functions in the pathway purine metabolism; IMP biosynthesis via de novo pathway; 5-amino-1-(5-phospho-D-ribosyl)imidazole-4-carboxamide from 5-amino-1-(5-phospho-D-ribosyl)imidazole-4-carboxylate: step 1/2. This chain is Phosphoribosylaminoimidazole-succinocarboxamide synthase, found in Latilactobacillus sakei subsp. sakei (strain 23K) (Lactobacillus sakei subsp. sakei).